A 339-amino-acid chain; its full sequence is Phosphoribosylformylglycinamidine cyclo-ligase (339 aa).

This sequence belongs to the AIR synthase family.

The protein localises to the cytoplasm. It carries out the reaction 2-formamido-N(1)-(5-O-phospho-beta-D-ribosyl)acetamidine + ATP = 5-amino-1-(5-phospho-beta-D-ribosyl)imidazole + ADP + phosphate + H(+). Its pathway is purine metabolism; IMP biosynthesis via de novo pathway; 5-amino-1-(5-phospho-D-ribosyl)imidazole from N(2)-formyl-N(1)-(5-phospho-D-ribosyl)glycinamide: step 2/2. The chain is Phosphoribosylformylglycinamidine cyclo-ligase from Oceanobacillus iheyensis (strain DSM 14371 / CIP 107618 / JCM 11309 / KCTC 3954 / HTE831).